The sequence spans 569 residues: Beta-galactoside-specific lectin 3 (569 aa).

An N-terminal signal peptide occupies residues M1 to S33. E198 is an active-site residue. 3 cysteine pairs are disulfide-bonded: C280–C311, C327–C346, and C370–C387. The propeptide at E288 to D307 is connecting peptide. The 128-residue stretch at S314 to G441 folds into the Ricin B-type lectin 1 domain. D329–R331 contacts D-galactose. N-linked (GlcNAc...) asparagine glycosylation is found at N402 and N442. The region spanning A445–V568 is the Ricin B-type lectin 2 domain. 2 disulfide bridges follow: C458-C471 and C497-C514. D541–A543 is a binding site for D-galactose.

The protein belongs to the ribosome-inactivating protein family. Type 2 RIP subfamily. Disulfide-linked dimer of A and B chains.

It carries out the reaction Endohydrolysis of the N-glycosidic bond at one specific adenosine on the 28S rRNA.. The A chain is responsible for inhibiting protein synthesis through the catalytic inactivation of 60S ribosomal subunits by removing adenine from position 4,324 of 28S rRNA. The B chain binds to cell receptors and probably facilitates the entry into the cell of the A chain; B chains are also responsible for cell agglutination (lectin activity). Inhibits growth of the human tumor cell line Molt4. This Viscum album (European mistletoe) protein is Beta-galactoside-specific lectin 3.